The sequence spans 122 residues: Ribonuclease P protein component (122 aa).

It belongs to the RnpA family. In terms of assembly, consists of a catalytic RNA component (M1 or rnpB) and a protein subunit.

It catalyses the reaction Endonucleolytic cleavage of RNA, removing 5'-extranucleotides from tRNA precursor.. Functionally, RNaseP catalyzes the removal of the 5'-leader sequence from pre-tRNA to produce the mature 5'-terminus. It can also cleave other RNA substrates such as 4.5S RNA. The protein component plays an auxiliary but essential role in vivo by binding to the 5'-leader sequence and broadening the substrate specificity of the ribozyme. In Lactobacillus helveticus (strain DPC 4571), this protein is Ribonuclease P protein component.